The chain runs to 717 residues: uncharacterized protein (717 aa).

This sequence belongs to the asfivirus C717R family.

The protein localises to the virion. This is an uncharacterized protein from African swine fever virus (strain Badajoz 1971 Vero-adapted) (Ba71V).